Reading from the N-terminus, the 232-residue chain is 2-C-methyl-D-erythritol 4-phosphate cytidylyltransferase (232 aa).

Belongs to the IspD/TarI cytidylyltransferase family. IspD subfamily.

The enzyme catalyses 2-C-methyl-D-erythritol 4-phosphate + CTP + H(+) = 4-CDP-2-C-methyl-D-erythritol + diphosphate. Its pathway is isoprenoid biosynthesis; isopentenyl diphosphate biosynthesis via DXP pathway; isopentenyl diphosphate from 1-deoxy-D-xylulose 5-phosphate: step 2/6. Its function is as follows. Catalyzes the formation of 4-diphosphocytidyl-2-C-methyl-D-erythritol from CTP and 2-C-methyl-D-erythritol 4-phosphate (MEP). The chain is 2-C-methyl-D-erythritol 4-phosphate cytidylyltransferase from Synechococcus sp. (strain ATCC 27144 / PCC 6301 / SAUG 1402/1) (Anacystis nidulans).